Consider the following 424-residue polypeptide: Adenylosuccinate synthetase (424 aa).

GTP contacts are provided by residues 11 to 17 (GDEGKGK) and 39 to 41 (GHT). Asp12 (proton acceptor) is an active-site residue. Mg(2+) is bound by residues Asp12 and Gly39. IMP-binding positions include 12 to 15 (DEGK), 37 to 40 (NAGH), Thr127, Arg141, Gln223, Thr238, and Arg302. Residue His40 is the Proton donor of the active site. 298–304 (TTTGRGR) provides a ligand contact to substrate. Residues Arg304, 330–332 (KLD), and 412–414 (SVG) contribute to the GTP site.

This sequence belongs to the adenylosuccinate synthetase family. Homodimer. Mg(2+) serves as cofactor.

The protein localises to the cytoplasm. The catalysed reaction is IMP + L-aspartate + GTP = N(6)-(1,2-dicarboxyethyl)-AMP + GDP + phosphate + 2 H(+). The protein operates within purine metabolism; AMP biosynthesis via de novo pathway; AMP from IMP: step 1/2. Its function is as follows. Plays an important role in the de novo pathway of purine nucleotide biosynthesis. Catalyzes the first committed step in the biosynthesis of AMP from IMP. This Methanosarcina barkeri (strain Fusaro / DSM 804) protein is Adenylosuccinate synthetase.